The following is a 198-amino-acid chain: MFFYVLLLALMAQGWSLPQGKTGEDSPVFRPPSPPMGPSLPPPVSHDLHRPSGHPEEFRTGASLPPKETPNEPRHGRPKRDLHHGKVVPTGVPHHTGEVLHHTDCSSNTHKSHEENRPKGFRTGRPLLPIKPEHGRHRRDLHHGKAVPTGVPHHTEKFHNGSNGKSHPPRPGHSTSAHNDNSSEEKRPKHGQEQGKKH.

The signal sequence occupies residues 1-18; that stretch reads MFFYVLLLALMAQGWSLP. Residues 17-198 form a disordered region; that stretch reads LPQGKTGEDS…KHGQEQGKKH (182 aa). The span at 29 to 44 shows a compositional bias: pro residues; sequence FRPPSPPMGPSLPPPV. A compositionally biased stretch (basic and acidic residues) spans 46–59; that stretch reads HDLHRPSGHPEEFR. Residues 76–86 show a composition bias toward basic residues; that stretch reads GRPKRDLHHGK. Basic and acidic residues predominate over residues 95 to 104; it reads HTGEVLHHTD. Positions 134 to 145 are enriched in basic residues; it reads HGRHRRDLHHGK. Residues 181–198 are compositionally biased toward basic and acidic residues; sequence NSSEEKRPKHGQEQGKKH.

As to expression, expressed in the periphery of the cement gland as well as in the region of the hatching gland.

It is found in the secreted. This Xenopus laevis (African clawed frog) protein is Protein XA-1.